The following is a 157-amino-acid chain: uncharacterized protein (157 aa).

The span at methionine 1–aspartate 11 shows a compositional bias: basic and acidic residues. The interval methionine 1–threonine 22 is disordered.

It localises to the mitochondrion. This is an uncharacterized protein from Arabidopsis thaliana (Mouse-ear cress).